Consider the following 217-residue polypeptide: Translation initiation factor IF-3 (217 aa).

A disordered region spans residues 185 to 217; that stretch reads YNLPETETTRIREENREKQKEKENTSKEGNKDA. The segment covering 191–217 has biased composition (basic and acidic residues); that stretch reads ETTRIREENREKQKEKENTSKEGNKDA.

It belongs to the IF-3 family. As to quaternary structure, monomer.

It is found in the cytoplasm. Functionally, IF-3 binds to the 30S ribosomal subunit and shifts the equilibrium between 70S ribosomes and their 50S and 30S subunits in favor of the free subunits, thus enhancing the availability of 30S subunits on which protein synthesis initiation begins. This is Translation initiation factor IF-3 from Methylacidiphilum infernorum (isolate V4) (Methylokorus infernorum (strain V4)).